The primary structure comprises 349 residues: Ribosomal RNA small subunit methyltransferase H 2 (349 aa).

S-adenosyl-L-methionine is bound by residues 80–82, D100, F130, D149, and Q156; that span reads GGH.

Belongs to the methyltransferase superfamily. RsmH family.

The protein resides in the cytoplasm. It carries out the reaction cytidine(1402) in 16S rRNA + S-adenosyl-L-methionine = N(4)-methylcytidine(1402) in 16S rRNA + S-adenosyl-L-homocysteine + H(+). In terms of biological role, specifically methylates the N4 position of cytidine in position 1402 (C1402) of 16S rRNA. The sequence is that of Ribosomal RNA small subunit methyltransferase H 2 from Alkaliphilus metalliredigens (strain QYMF).